The chain runs to 308 residues: Homeobox protein HMX3 (308 aa).

Disordered regions lie at residues 1-57 and 107-184; these read MPET…GFAL and AEKS…KKKT. Pro residues predominate over residues 9–19; that stretch reads PSAPPPPPPPK. Composition is skewed to basic and acidic residues over residues 135-144 and 156-177; these read AEQKERDPKS and EEGK…PEKK. The segment at residues 181–240 is a DNA-binding region (homeobox); that stretch reads KKKTRTVFSRSQVFQLESTFDMKRYLSSSERAGLAASLHLTETQVKIWFQNRRNKWKRQL.

This sequence belongs to the HMX homeobox family.

It localises to the nucleus. Its function is as follows. Transcription factor involved in specification of neuronal cell types and which is required for inner ear and hypothalamus development. Binds to the 5'-CAAGTG-3' core sequence. This chain is Homeobox protein HMX3 (HMX3), found in Gallus gallus (Chicken).